Reading from the N-terminus, the 176-residue chain is Ribosome maturation factor RimM (176 aa).

A PRC barrel domain is found at 100 to 173 (PEEYYDYQLI…RLRIDPPPGL (74 aa)).

This sequence belongs to the RimM family. In terms of assembly, binds ribosomal protein uS19.

It localises to the cytoplasm. An accessory protein needed during the final step in the assembly of 30S ribosomal subunit, possibly for assembly of the head region. Essential for efficient processing of 16S rRNA. May be needed both before and after RbfA during the maturation of 16S rRNA. It has affinity for free ribosomal 30S subunits but not for 70S ribosomes. The sequence is that of Ribosome maturation factor RimM from Acidothermus cellulolyticus (strain ATCC 43068 / DSM 8971 / 11B).